Reading from the N-terminus, the 427-residue chain is Riboflavin transporter rft-1 (427 aa).

Topologically, residues 1-2 (MK) are cytoplasmic. A helical transmembrane segment spans residues 3–23 (TFLFTFCLVAIFGSSSWIGTN). Residues 24 to 42 (SVWMELSLLTAKLPEGWNL) lie on the Extracellular side of the membrane. Residues 43-63 (PSYLSAIVQIACLGPLIYSII) traverse the membrane as a helical segment. The Cytoplasmic portion of the chain corresponds to 64–73 (HKGIKMTIPT). The helical transmembrane segment at 74–94 (VPLIFIFMVLACICQLGLCFF) threads the bilayer. At 95-111 (WDDTGYIFGAIRSWPLY) the chain is on the extracellular side. A helical transmembrane segment spans residues 112-132 (LLLFGLAIVDAISSVLFLPFM). Residues 133–139 (AQFHPSF) are Cytoplasmic-facing. A helical membrane pass occupies residues 140-160 (LNAYFVGMGLSALIPSLLSLI). Residues 161 to 184 (QGTSNYWCDDNKTPHYYPPRFSVS) lie on the Extracellular side of the membrane. A helical membrane pass occupies residues 185 to 205 (MFFLINFFFTCAAVAAFLVLY). The Cytoplasmic segment spans residues 206-261 (KIGAHKNSSQVEPEPKHSIQIIQGDSTTDVNEVNTESSFQETSSIPDSSSATGARL). Residues 262–282 (AFLLLTTALVNAQMNGIVTSV) form a helical membrane-spanning segment. Residues 283-297 (QSYATLVYSQNTYHY) lie on the Extracellular side of the membrane. A helical membrane pass occupies residues 298–318 (AVTLSNVISPLASYLQFFVKI). The Cytoplasmic portion of the chain corresponds to 319–322 (RSLP). Residues 323 to 343 (ILAFLTLCSSLTTAVIIYLAA) form a helical membrane-spanning segment. Over 344–353 (LSPNWIFNSE) the chain is Extracellular. A helical membrane pass occupies residues 354–374 (TAGTIISIASSLIAAGLHSYL). Residues 375-391 (RVMFAALLREGNQKESR) are Cytoplasmic-facing. A helical membrane pass occupies residues 392–412 (LFWCGAFIQIGSFTGSAIMFP). The Extracellular portion of the chain corresponds to 413-427 (LVNVWKLFHSAPSCR).

It belongs to the riboflavin transporter family. In terms of tissue distribution, expressed in intestine.

The protein localises to the cell membrane. The catalysed reaction is riboflavin(in) = riboflavin(out). With respect to regulation, activity is strongly inhibited by riboflavin analogs, such as lumiflavin and lumichrome. In terms of biological role, riboflavin transporter. Riboflavin transport is Na(+)-independent but pH-sensitive. The protein is Riboflavin transporter rft-1 of Caenorhabditis elegans.